A 130-amino-acid polypeptide reads, in one-letter code: S-adenosylmethionine decarboxylase proenzyme (130 aa).

The active-site Schiff-base intermediate with substrate; via pyruvic acid is the serine 63. Serine 63 carries the pyruvic acid (Ser); by autocatalysis modification. Histidine 68 functions as the Proton acceptor; for processing activity in the catalytic mechanism. The active-site Proton donor; for catalytic activity is the cysteine 83.

Belongs to the prokaryotic AdoMetDC family. Type 1 subfamily. As to quaternary structure, heterotetramer of two alpha and two beta chains arranged as a dimer of alpha/beta heterodimers. Pyruvate serves as cofactor. Post-translationally, is synthesized initially as an inactive proenzyme. Formation of the active enzyme involves a self-maturation process in which the active site pyruvoyl group is generated from an internal serine residue via an autocatalytic post-translational modification. Two non-identical subunits are generated from the proenzyme in this reaction, and the pyruvate is formed at the N-terminus of the alpha chain, which is derived from the carboxyl end of the proenzyme. The post-translation cleavage follows an unusual pathway, termed non-hydrolytic serinolysis, in which the side chain hydroxyl group of the serine supplies its oxygen atom to form the C-terminus of the beta chain, while the remainder of the serine residue undergoes an oxidative deamination to produce ammonia and the pyruvoyl group blocking the N-terminus of the alpha chain.

The catalysed reaction is S-adenosyl-L-methionine + H(+) = S-adenosyl 3-(methylsulfanyl)propylamine + CO2. It participates in amine and polyamine biosynthesis; S-adenosylmethioninamine biosynthesis; S-adenosylmethioninamine from S-adenosyl-L-methionine: step 1/1. In terms of biological role, catalyzes the decarboxylation of S-adenosylmethionine to S-adenosylmethioninamine (dcAdoMet), the propylamine donor required for the synthesis of the polyamines spermine and spermidine from the diamine putrescine. The sequence is that of S-adenosylmethionine decarboxylase proenzyme from Thermosipho melanesiensis (strain DSM 12029 / CIP 104789 / BI429).